The chain runs to 414 residues: Nucleoredoxin (414 aa).

The Thioredoxin domain maps to 131–305; that stretch reads LLVKDDPEGL…ELNAVQLNEG (175 aa).

Belongs to the nucleoredoxin family.

It is found in the cytoplasm. It localises to the cytosol. The protein localises to the nucleus. The enzyme catalyses [protein]-dithiol + NAD(+) = [protein]-disulfide + NADH + H(+). It catalyses the reaction [protein]-dithiol + NADP(+) = [protein]-disulfide + NADPH + H(+). In terms of biological role, functions as a redox-dependent negative regulator of the Wnt signaling pathway. The protein is Nucleoredoxin (nxn) of Xenopus laevis (African clawed frog).